Here is a 628-residue protein sequence, read N- to C-terminus: Methionine--tRNA ligase (628 aa).

Positions 9–19 match the 'HIGH' region motif; that stretch reads YYVNDVPHLGH. Zn(2+) contacts are provided by C124, C127, C142, and C145. The 'KMSKS' region motif lies at 294 to 298; sequence KMSKS. K297 is an ATP binding site. One can recognise a tRNA-binding domain in the interval 527-628; sequence DFAKIEIKVA…QLVQNGSLVG (102 aa).

Belongs to the class-I aminoacyl-tRNA synthetase family. MetG type 2A subfamily. As to quaternary structure, homodimer. It depends on Zn(2+) as a cofactor.

The protein resides in the cytoplasm. The enzyme catalyses tRNA(Met) + L-methionine + ATP = L-methionyl-tRNA(Met) + AMP + diphosphate. Functionally, is required not only for elongation of protein synthesis but also for the initiation of all mRNA translation through initiator tRNA(fMet) aminoacylation. This Campylobacter jejuni subsp. jejuni serotype O:2 (strain ATCC 700819 / NCTC 11168) protein is Methionine--tRNA ligase (metG).